The chain runs to 1005 residues: Protein TIC 214 (1005 aa).

Helical transmembrane passes span V25–L45, F67–L87, H91–G111, S131–G151, F177–W197, and L304–Y324. Disordered stretches follow at residues V457–E481 and K767–Q833. Residues K783–S810 are compositionally biased toward basic residues. A compositionally biased stretch (basic and acidic residues) spans K811–S824.

Belongs to the TIC214 family. Part of the Tic complex.

It localises to the plastid. The protein localises to the chloroplast inner membrane. Its function is as follows. Involved in protein precursor import into chloroplasts. May be part of an intermediate translocation complex acting as a protein-conducting channel at the inner envelope. The protein is Protein TIC 214 of Oenothera berteroana (Bertero's evening primrose).